The chain runs to 395 residues: FAD-dependent urate hydroxylase (395 aa).

FAD is bound by residues glycine 11, 30–31, serine 43, and methionine 125; that span reads ER. Residues asparagine 180, arginine 206, and 218 to 220 contribute to the substrate site; that span reads YFF. FAD is bound by residues aspartate 287 and 297 to 301; that span reads GQGGC.

This sequence belongs to the FAD-dependent urate hydroxylase family. In terms of assembly, monomer. FAD serves as cofactor.

It carries out the reaction urate + NADH + O2 + H(+) = 5-hydroxyisourate + NAD(+) + H2O. It participates in purine metabolism; urate degradation. Its function is as follows. Catalyzes the hydroxylation of urate to 5-hydroxyisourate (HIU). Is likely to be involved in the urate degradation pathway to allantoin. Prefers NADH over NADPH as the electron donor. This Mycolicibacterium vanbaalenii (strain DSM 7251 / JCM 13017 / BCRC 16820 / KCTC 9966 / NRRL B-24157 / PYR-1) (Mycobacterium vanbaalenii) protein is FAD-dependent urate hydroxylase.